The chain runs to 829 residues: Dipeptidyl peptidase family member 2 (829 aa).

Residues M1–C27 lie on the Cytoplasmic side of the membrane. Residues C28–M48 form a helical; Signal-anchor for type II membrane protein membrane-spanning segment. The Extracellular segment spans residues Q49–L829. N61, N66, N183, N209, N314, and N359 each carry an N-linked (GlcNAc...) asparagine glycan. C514 and C533 are joined by a disulfide. The active-site Charge relay system is the S691. C711 and C821 are disulfide-bonded. An N-linked (GlcNAc...) asparagine glycan is attached at N754. Catalysis depends on charge relay system residues D768 and H800.

This sequence belongs to the peptidase S9B family. DPPIV subfamily.

The protein localises to the cell membrane. Functionally, removes N-terminal dipeptides sequentially from polypeptides. Essential for control of distal tip cell migration. The polypeptide is Dipeptidyl peptidase family member 2 (dpf-2) (Caenorhabditis elegans).